A 716-amino-acid chain; its full sequence is MTVQLSDEAYAVVEGRHADPFRYLGAHPEDGGTMVRVLLPDAVAVEVIGDNGDVAPLDQAHPAGLFVGPLPGASPRYTLRARFGDTTVELQDPYRFPPILSDFDLYLLGEGTDQRLYDKLGAHPMELEGVAGVGFVVLAPNARRVSVVGDFNFWNPLRHQMRVRGSGYWELFVPGARAGDHYKFDLAGPNGEQLPQKADPLAFAAELRPKTASIVVDATTLPRPRPAPENINALSAPMSIYEVHLGSWRRKEGDQWLTYRELAEQLPAYVRDMGFTHVEFLPVSEHPFDGSWGYQPTGLYAPTSRFGSPEDFCALVDACHAAGIGVILDWVPGHFPDDPHGLGNFDGTALYEHANPMQGRHLDWGTLIYNYGRTEVVNFLTANALFWLERYGIDGLRVDAVASMLYLDYSRPAGGWIPNKFGGRENIEAIDFIRRFNTEVYGKFPHSTTAAEESTAWPQVSRPIEFGGLGFGYKWNMGWMHDTLNYISKDPIHRKYHHGQILFGLHYAFSENFILPLSHDEVVHGKRSILGRMPGDEWQRFANLRAYYAFMFGHPGKKLLFMGSEFGQEREWSHDRSLDWHLLEYPKYSGIQALLRDLNKLYRSLPALHQLDCDPFGFEWLITEDANRNLFAWMRKGNDTRARCLVIVNFSPNVYQDYRVRVPFPGRWREVFNSDSAGYGGTNVGNGGEVRTLEGLVPELSLTIPPLAAIFLTPED.

The Nucleophile role is filled by D399. E452 functions as the Proton donor in the catalytic mechanism.

Belongs to the glycosyl hydrolase 13 family. GlgB subfamily. In terms of assembly, monomer.

The catalysed reaction is Transfers a segment of a (1-&gt;4)-alpha-D-glucan chain to a primary hydroxy group in a similar glucan chain.. It functions in the pathway glycan biosynthesis; glycogen biosynthesis. Its function is as follows. Catalyzes the formation of the alpha-1,6-glucosidic linkages in glycogen by scission of a 1,4-alpha-linked oligosaccharide from growing alpha-1,4-glucan chains and the subsequent attachment of the oligosaccharide to the alpha-1,6 position. The sequence is that of 1,4-alpha-glucan branching enzyme GlgB from Rhodopseudomonas palustris (strain ATCC BAA-98 / CGA009).